The chain runs to 261 residues: Acetoacetate decarboxylase 2 (261 aa).

K116 functions as the Schiff-base intermediate with acetoacetate in the catalytic mechanism.

This sequence belongs to the ADC family.

The enzyme catalyses acetoacetate + H(+) = acetone + CO2. Catalyzes the conversion of acetoacetate to acetone and carbon dioxide. The polypeptide is Acetoacetate decarboxylase 2 (Mesorhizobium japonicum (strain LMG 29417 / CECT 9101 / MAFF 303099) (Mesorhizobium loti (strain MAFF 303099))).